A 340-amino-acid polypeptide reads, in one-letter code: NADH-quinone oxidoreductase subunit H (340 aa).

The next 9 helical transmembrane spans lie at 9–29 (IWII…VAFI), 81–101 (LIAP…IPFA), 113–133 (LLFL…AGWA), 158–178 (GFAL…GIVL), 184–204 (LWHW…ITAV), 221–240 (IVAG…FFLA), 245–264 (MVLV…LSPF), 273–293 (LFAW…FIFT), and 316–336 (VLIP…EFHW).

It belongs to the complex I subunit 1 family. As to quaternary structure, NDH-1 is composed of 14 different subunits. Subunits NuoA, H, J, K, L, M, N constitute the membrane sector of the complex.

Its subcellular location is the cell inner membrane. It carries out the reaction a quinone + NADH + 5 H(+)(in) = a quinol + NAD(+) + 4 H(+)(out). In terms of biological role, NDH-1 shuttles electrons from NADH, via FMN and iron-sulfur (Fe-S) centers, to quinones in the respiratory chain. The immediate electron acceptor for the enzyme in this species is believed to be ubiquinone. Couples the redox reaction to proton translocation (for every two electrons transferred, four hydrogen ions are translocated across the cytoplasmic membrane), and thus conserves the redox energy in a proton gradient. This subunit may bind ubiquinone. This is NADH-quinone oxidoreductase subunit H from Coxiella burnetii (strain CbuK_Q154) (Coxiella burnetii (strain Q154)).